We begin with the raw amino-acid sequence, 343 residues long: Thromboxane A2 receptor (343 aa).

At Met-1–Trp-29 the chain is on the extracellular side. Asn-4 and Asn-16 each carry an N-linked (GlcNAc...) asparagine glycan. Residues Phe-30–Ala-52 traverse the membrane as a helical segment. The Cytoplasmic segment spans residues Arg-53–Phe-66. Residues Leu-67–Ser-87 form a helical membrane-spanning segment. The Extracellular segment spans residues Gln-88–Arg-106. The cysteines at positions 105 and 183 are disulfide-linked. Residues Phe-107 to Ser-128 traverse the membrane as a helical segment. At Glu-129–Ala-149 the chain is on the cytoplasmic side. A helical membrane pass occupies residues Trp-150–Gly-172. At Arg-173 to Asp-193 the chain is on the extracellular side. Residues Val-194–Val-219 traverse the membrane as a helical segment. The Cytoplasmic segment spans residues Ala-220–Gln-246. The helical transmembrane segment at Leu-247–Leu-270 threads the bilayer. At Arg-271–Glu-289 the chain is on the extracellular side. Residues Leu-290 to Phe-311 form a helical membrane-spanning segment. Residues Arg-312–Gln-343 lie on the Cytoplasmic side of the membrane. A phosphoserine mark is found at Ser-329 and Ser-331.

The protein belongs to the G-protein coupled receptor 1 family. As to quaternary structure, interacts with RPGRIP1L. Interacts with PSMA3. Interacts with RACK1; the interaction regulates TBXA2R cell surface expression.

The protein resides in the cell membrane. In terms of biological role, receptor for thromboxane A2 (TXA2), a potent stimulator of platelet aggregation. The activity of this receptor is mediated by a G-protein that activates a phosphatidylinositol-calcium second messenger system. In the kidney, the binding of TXA2 to glomerular TP receptors causes intense vasoconstriction. Activates phospholipase C. Activates adenylyl cyclase. Its function is as follows. Inhibits adenylyl cyclase. This Homo sapiens (Human) protein is Thromboxane A2 receptor (TBXA2R).